Consider the following 137-residue polypeptide: 14 kDa proline-rich protein DC2.15 (137 aa).

The first 25 residues, 1-25 (MGSKNSASVALFFTLNILFFALVSS), serve as a signal peptide directing secretion. The tract at residues 30–53 (PDPYKPKPKPTPKPTPTPYPSAGK) is disordered. A compositionally biased stretch (pro residues) spans 38 to 48 (KPTPKPTPTPY). Residues 88 to 104 (LEGLVNLEAAVCLCTAI) traverse the membrane as a helical segment.

Its subcellular location is the membrane. Its function is as follows. May be connected with the initiation of embryogenesis or with the metabolic changes produced by the removal of auxins. This Daucus carota (Wild carrot) protein is 14 kDa proline-rich protein DC2.15.